Reading from the N-terminus, the 326-residue chain is Protein phosphatase 1 regulatory subunit SDS22 homolog (326 aa).

Residues 1–22 (MSNDKSAEVVVLPRENDEESKE) form a disordered region. LRR repeat units lie at residues 35-57 (DIDS…LTGF), 58-80 (PKIE…ISSL), 81-102 (VTLT…LESL), 103-126 (VNLV…KLTK), 128-146 (ETLY…LEAL), 147-170 (TQLK…HLVN), 172-190 (DELF…VETL), 191-212 (QKLS…VEQL), 213-236 (NNLK…PLTN), 238-256 (LLLD…VERL), 257-280 (ESLN…QLSK), and 281-304 (LKGL…QYRR).

Belongs to the SDS22 family.

It localises to the nucleus. Its function is as follows. Regulatory subunit of protein phosphatase 1. The chain is Protein phosphatase 1 regulatory subunit SDS22 homolog (sds-22) from Caenorhabditis elegans.